Consider the following 295-residue polypeptide: Ethanolamine ammonia-lyase small subunit (295 aa).

3 residues coordinate adenosylcob(III)alamin: valine 207, glutamate 228, and cysteine 258.

It belongs to the EutC family. In terms of assembly, the basic unit is a heterodimer which dimerizes to form tetramers. The heterotetramers trimerize; 6 large subunits form a core ring with 6 small subunits projecting outwards. Requires adenosylcob(III)alamin as cofactor.

Its subcellular location is the bacterial microcompartment. It catalyses the reaction ethanolamine = acetaldehyde + NH4(+). The protein operates within amine and polyamine degradation; ethanolamine degradation. In terms of biological role, catalyzes the deamination of various vicinal amino-alcohols to oxo compounds. Allows this organism to utilize ethanolamine as the sole source of nitrogen and carbon in the presence of external vitamin B12. This Escherichia coli O7:K1 (strain IAI39 / ExPEC) protein is Ethanolamine ammonia-lyase small subunit.